Here is a 413-residue protein sequence, read N- to C-terminus: Phosphopentomutase (413 aa).

Residues aspartate 11, aspartate 306, histidine 311, aspartate 347, histidine 348, and histidine 359 each contribute to the Mn(2+) site.

It belongs to the phosphopentomutase family. Requires Mn(2+) as cofactor.

The protein resides in the cytoplasm. The enzyme catalyses 2-deoxy-alpha-D-ribose 1-phosphate = 2-deoxy-D-ribose 5-phosphate. The catalysed reaction is alpha-D-ribose 1-phosphate = D-ribose 5-phosphate. It participates in carbohydrate degradation; 2-deoxy-D-ribose 1-phosphate degradation; D-glyceraldehyde 3-phosphate and acetaldehyde from 2-deoxy-alpha-D-ribose 1-phosphate: step 1/2. Functionally, isomerase that catalyzes the conversion of deoxy-ribose 1-phosphate (dRib-1-P) and ribose 1-phosphate (Rib-1-P) to deoxy-ribose 5-phosphate (dRib-5-P) and ribose 5-phosphate (Rib-5-P), respectively. This is Phosphopentomutase from Helicobacter pylori (strain G27).